A 248-amino-acid chain; its full sequence is MNFYRSSIISQIIKYNRRLAKSIICEDDSQIITLTAFVNQCLWCHKRVSVSAILLTTDNKILVCNRRDSFLYSEIIRTRNMFRKKRLFLNYSNYLNKQERSILSSFFSLDPATADNDRIDAIYPGGIPKRGENVPECLSREIKEEVNIDNSFVFIDTRFFIHGIIEDTIINKFFEVIFFVGRISLTSDQIIDTFKSNHEIKDLIFLDPNSGNGLQYEIAKYALDTAKLKCYGHRGCYYESLKKLTEDD.

The 183-residue stretch at 45-227 (HKRVSVSAIL…IAKYALDTAK (183 aa)) folds into the Nudix hydrolase domain. A Nudix box motif is present at residues 126–147 (GIPKRGENVPECLSREIKEEVN). E132 serves as a coordination point for Mg(2+). Residue E141 is the Nucleophile of the active site. Mn(2+) is bound at residue E145. D167 provides a ligand contact to Mg(2+).

It belongs to the Nudix hydrolase family. It depends on Mg(2+) as a cofactor. The cofactor is Mn(2+).

The protein resides in the host mitochondrion. Its function is as follows. Decapping enzyme that remove the protective 5'-cap from both host and viral mRNAs to commit transcripts for decay by the cellular exonuclease XRN1. Preferentially targets spliced mRNAs and since all viral genes are intronless, it preferentially targets host over viral transcripts. Acceleration of the turnover of cellular transcripts promotes the shutoff of host protein synthesis and therefore diminish the magnitude of antiviral response. This Bos taurus (Bovine) protein is mRNA-decapping protein OPG122 (OPG122).